The chain runs to 91 residues: MLTFWHWKWLGIKNTEFKCVKGKLYLSPIKDLFNNEIIAYDLVRSPNSEQITQMMKQAVARLAGAKPILHSDQGWQYQMIGYQNILRENGI.

Positions 1–91 (MLTFWHWKWL…YQNILRENGI (91 aa)) constitute an Integrase catalytic domain.

This is an uncharacterized protein from Haemophilus influenzae (strain ATCC 51907 / DSM 11121 / KW20 / Rd).